A 197-amino-acid chain; its full sequence is Probable GTP-binding protein EngB (197 aa).

In terms of domain architecture, EngB-type G spans 22 to 195; it reads ALPELALVGR…WQWIEERTGV (174 aa). Residues 30–37, 57–61, 75–78, 142–145, and 174–176 contribute to the GTP site; these read GRSNVGKS, GKTQT, DVPG, TKVD, and FSA. The Mg(2+) site is built by Ser37 and Thr59.

The protein belongs to the TRAFAC class TrmE-Era-EngA-EngB-Septin-like GTPase superfamily. EngB GTPase family. It depends on Mg(2+) as a cofactor.

Its function is as follows. Necessary for normal cell division and for the maintenance of normal septation. In Limosilactobacillus fermentum (strain NBRC 3956 / LMG 18251) (Lactobacillus fermentum), this protein is Probable GTP-binding protein EngB.